Reading from the N-terminus, the 206-residue chain is FMN-dependent NADH:quinone oxidoreductase (206 aa).

FMN-binding positions include 15-17 (SVS), 94-97 (MYNF), and 138-141 (TRGG).

It belongs to the azoreductase type 1 family. As to quaternary structure, homodimer. Requires FMN as cofactor.

It catalyses the reaction 2 a quinone + NADH + H(+) = 2 a 1,4-benzosemiquinone + NAD(+). The enzyme catalyses N,N-dimethyl-1,4-phenylenediamine + anthranilate + 2 NAD(+) = 2-(4-dimethylaminophenyl)diazenylbenzoate + 2 NADH + 2 H(+). In terms of biological role, quinone reductase that provides resistance to thiol-specific stress caused by electrophilic quinones. Functionally, also exhibits azoreductase activity. Catalyzes the reductive cleavage of the azo bond in aromatic azo compounds to the corresponding amines. This Rhizobium meliloti (strain 1021) (Ensifer meliloti) protein is FMN-dependent NADH:quinone oxidoreductase.